The following is a 466-amino-acid chain: Uronate isomerase (466 aa).

The protein belongs to the metallo-dependent hydrolases superfamily. Uronate isomerase family.

It catalyses the reaction D-glucuronate = D-fructuronate. It carries out the reaction aldehydo-D-galacturonate = keto-D-tagaturonate. The protein operates within carbohydrate metabolism; pentose and glucuronate interconversion. In Caldanaerobacter subterraneus subsp. tengcongensis (strain DSM 15242 / JCM 11007 / NBRC 100824 / MB4) (Thermoanaerobacter tengcongensis), this protein is Uronate isomerase.